Here is a 162-residue protein sequence, read N- to C-terminus: Catabolic 3-dehydroquinase (162 aa).

The active-site Proton acceptor is Y24. 3 residues coordinate substrate: N88, H94, and D101. The Proton donor role is filled by H114. Residues 115 to 116 and R125 each bind substrate; that span reads VS.

The protein belongs to the type-II 3-dehydroquinase family. In terms of assembly, homododecamer. Adopts a ring-like structure, composed of an arrangement of two hexameric rings stacked on top of one another.

It catalyses the reaction 3-dehydroquinate = 3-dehydroshikimate + H2O. The protein operates within aromatic compound metabolism; 3,4-dihydroxybenzoate biosynthesis; 3,4-dihydroxybenzoate from 3-dehydroquinate: step 1/2. Functionally, is involved in the catabolism of quinate. Allows the utilization of quinate as carbon source via the beta-ketoadipate pathway. The chain is Catabolic 3-dehydroquinase from Podospora anserina (strain S / ATCC MYA-4624 / DSM 980 / FGSC 10383) (Pleurage anserina).